The following is a 53-amino-acid chain: Snake venom serine protease LmrSP-4 (53 aa).

The cysteines at positions 26 and 42 are disulfide-linked. His41 (charge relay system) is an active-site residue.

As to quaternary structure, monomer. In terms of processing, N-glycosylated. In terms of tissue distribution, expressed by the venom gland.

The protein resides in the secreted. Its activity is regulated as follows. Inhibited by the small molecule serine protease inhibitors phenylmethylsulfonyl fluoride (PMSF) and benzamidine. Its function is as follows. Snake venom serine protease that has fibrinogenolytic activity. Hydrolyzes the alpha-chain of fibrinogen (FGA), without affecting the beta- and the gamma-chains. Also displays hydrolytic activity towards S-2302 (plasma kallikrein substrate) and S-2251 (substrate for plasmin), but has no hydrolytic activity with S-2238 (thrombin substrate) or S-2222 (factor Xa). The chain is Snake venom serine protease LmrSP-4 from Lachesis muta rhombeata (Bushmaster).